Consider the following 700-residue polypeptide: Elongation factor G 2 (700 aa).

Residues 8 to 290 (ERYRNIGISA…AVVDYLPSPI (283 aa)) form the tr-type G domain. GTP-binding positions include 17 to 24 (AHIDAGKT), 88 to 92 (DTPGH), and 142 to 145 (NKMD).

The protein belongs to the TRAFAC class translation factor GTPase superfamily. Classic translation factor GTPase family. EF-G/EF-2 subfamily.

It is found in the cytoplasm. Its function is as follows. Catalyzes the GTP-dependent ribosomal translocation step during translation elongation. During this step, the ribosome changes from the pre-translocational (PRE) to the post-translocational (POST) state as the newly formed A-site-bound peptidyl-tRNA and P-site-bound deacylated tRNA move to the P and E sites, respectively. Catalyzes the coordinated movement of the two tRNA molecules, the mRNA and conformational changes in the ribosome. The sequence is that of Elongation factor G 2 (fusB) from Ralstonia nicotianae (strain ATCC BAA-1114 / GMI1000) (Ralstonia solanacearum).